Reading from the N-terminus, the 782-residue chain is Zinc finger and SCAN domain-containing protein 10 (782 aa).

Residues 1–37 (MLAEPVPDALEQEHPGAVKLEEDEVGEEDPRLAESRP) form a disordered region. In terms of domain architecture, SCAN box spans 1–71 (MLAEPVPDAL…GRLRELCNHW (71 aa)). Basic and acidic residues-rich tracts occupy residues 11-20 (EQEHPGAVKL) and 28-37 (EDPRLAESRP). A phosphoserine mark is found at Ser-160 and Ser-206. Disordered regions lie at residues 197–233 (LAPS…ENSR) and 290–321 (SQTE…TPAD). 14 consecutive C2H2-type zinc fingers follow at residues 292–315 (TEKP…STGW), 321–343 (DGSE…EMQF), 349–371 (GVNF…NLQP), 377–399 (SFRC…HMRT), 421–443 (LTKH…NQGF), 467–489 (EGKT…TFKR), 495–517 (RHLR…SLSS), 523–545 (PYVC…HTRR), 551–573 (RPFS…SHQQ), 579–601 (KPHA…RHLL), 607–629 (RPYH…RHVR), 635–657 (KPCR…RHQR), 669–691 (ICGH…TGER), and 697–719 (TCGR…TGSK). A compositionally biased stretch (polar residues) spans 302 to 313 (LTQTVGQETSST). The residue at position 485 (Gln-485) is an N5-methylglutamine. The disordered stretch occupies residues 491-522 (SSLKRHLRNHAKDKDHLSSEDPGSLSSSQESN). Residues 500 to 509 (HAKDKDHLSS) are compositionally biased toward basic and acidic residues. Residues 510–521 (EDPGSLSSSQES) are compositionally biased toward low complexity.

In terms of assembly, interacts with POU5F1/OCT4 and SOX2. Post-translationally, methylated at Gln-485 by N6AMT1. In terms of tissue distribution, embryonic stem (ES) cell-specific. Not expressed in adult, except in testis.

Its subcellular location is the nucleus. Its function is as follows. Embryonic stem (ES) cell-specific transcription factor required to maintain ES cell pluripotency. Can both activate and /or repress expression of target genes, depending on the context. Specifically binds the 5'-[GA]CGCNNGCG[CT]-3' DNA consensus sequence. Regulates expression of POU5F1/OCT4, ZSCAN4 and ALYREF/THOC4. This chain is Zinc finger and SCAN domain-containing protein 10 (Zscan10), found in Mus musculus (Mouse).